A 1419-amino-acid polypeptide reads, in one-letter code: Formin-1 (1419 aa).

The interval 1 to 622 (MEGTHCTLQL…TAEPQHQSPP (622 aa)) is microtubule-binding. Disordered regions lie at residues 138–194 (DWQG…MGKD), 262–331 (LGRE…KVVA), 343–641 (VVKT…TPKD), and 685–711 (SLTE…DTEE). Residues 151 to 163 (RSTHGNKKPRRSS) are compositionally biased toward basic residues. Over residues 298–317 (SHQDPEKHPEAEKDEMEKPA) the composition is skewed to basic and acidic residues. Residues 394–411 (RSSQSPAGETASISSVSA) are compositionally biased toward polar residues. A compositionally biased stretch (basic and acidic residues) spans 425–438 (IESEKLDEAPEGKR). The segment at 456 to 842 (NKRRAGLPLG…LNISSLSQLS (387 aa)) is mediates interaction with alpha-catenin. Polar residues predominate over residues 504-517 (FNNSASQSSTHKQT). Residues 520–529 (VPSPLSPRLP) show a composition bias toward pro residues. A compositionally biased stretch (polar residues) spans 614–623 (AEPQHQSPPG). Over residues 685 to 694 (SLTEQDDRTP) the composition is skewed to basic and acidic residues. Positions 720–774 (AEYQAAILHLKREHKEEIENLQAQFELRAFHIRGEHAMITARLEETIENLKHELE) form a coiled coil. 2 disordered regions span residues 859–978 (GMAS…AIEP) and 1390–1419 (SEKK…VTTN). Composition is skewed to pro residues over residues 868–882 (LPPP…PPLP) and 890–958 (PAPP…PPPG). The region spanning 870-957 (PPPASIPPPP…PPGLAPPPPP (88 aa)) is the FH1 domain. The region spanning 972 to 1388 (RKPAIEPSCP…KMAQESVSKL (417 aa)) is the FH2 domain.

Belongs to the formin homology family. Cappuccino subfamily. In terms of assembly, interacts with alpha-catenin and may interact with tubulin. In terms of processing, phosphorylated on serine and possibly threonine residues.

It localises to the nucleus. It is found in the cytoplasm. The protein resides in the cell junction. Its subcellular location is the adherens junction. The protein localises to the cell membrane. Its function is as follows. Plays a role in the formation of adherens junction and the polymerization of linear actin cables. The protein is Formin-1 (FMN1) of Homo sapiens (Human).